We begin with the raw amino-acid sequence, 162 residues long: Nucleotide-binding protein Anae109_0095 (162 aa).

This sequence belongs to the YajQ family.

Nucleotide-binding protein. In Anaeromyxobacter sp. (strain Fw109-5), this protein is Nucleotide-binding protein Anae109_0095.